Reading from the N-terminus, the 399-residue chain is Methylthioribose kinase (399 aa).

ATP-binding positions include asparagine 40, lysine 57, and 111-113 (EDL). Residue aspartate 229 coordinates substrate. Position 246 to 248 (246 to 248 (DAE)) interacts with ATP. Arginine 344 serves as a coordination point for substrate.

Belongs to the methylthioribose kinase family. Homodimer.

It carries out the reaction 5-(methylsulfanyl)-D-ribose + ATP = 5-(methylsulfanyl)-alpha-D-ribose 1-phosphate + ADP + H(+). The protein operates within amino-acid biosynthesis; L-methionine biosynthesis via salvage pathway; S-methyl-5-thio-alpha-D-ribose 1-phosphate from S-methyl-5'-thioadenosine (hydrolase route): step 2/2. In terms of biological role, catalyzes the phosphorylation of methylthioribose into methylthioribose-1-phosphate. This chain is Methylthioribose kinase, found in Klebsiella pneumoniae subsp. pneumoniae (strain ATCC 700721 / MGH 78578).